A 336-amino-acid chain; its full sequence is MFLTLIAAIISFMVSAFTMPYFIKFYQLKKIGGQQMHEDVKQHLAKAGTPTMGGTVFLLVATAVSLLVSLFSIKNTQSLALISGILSIVVIYGIIGFLDDFLKIFKQINEGLTAKQKLALQLVGGLMFYFLHVSPSGISSINVFGYQLPLGIFYLFFVLFWVVGFSNAVNLTDGIDGLASISVVISLVTYGVIAYVQSQFDVLLLIGAMIGALLGFFCFNHKPAKVFMGDVGSLALGAMLAAISIALRQEWTLLIIGIVYVLETSSVMLQVSYFKYTKKKYGEGRRIFRMTPFHHHLELGGLSGKGKKWSEWQVDAFLWGVGSLASLLVLAILYVF.

The next 10 membrane-spanning stretches (helical) occupy residues 3-23, 53-73, 78-98, 118-138, 143-163, 174-194, 200-220, 226-246, 251-271, and 316-336; these read LTLIAAIISFMVSAFTMPYFI, GGTVFLLVATAVSLLVSLFSI, SLALISGILSIVVIYGIIGFL, LALQLVGGLMFYFLHVSPSGI, VFGYQLPLGIFYLFFVLFWVV, GIDGLASISVVISLVTYGVIA, FDVLLLIGAMIGALLGFFCFN, VFMGDVGSLALGAMLAAISIA, WTLLIIGIVYVLETSSVMLQV, and AFLWGVGSLASLLVLAILYVF.

This sequence belongs to the glycosyltransferase 4 family. MraY subfamily. Mg(2+) is required as a cofactor.

The protein resides in the cell membrane. It carries out the reaction UDP-N-acetyl-alpha-D-muramoyl-L-alanyl-gamma-D-glutamyl-L-lysyl-D-alanyl-D-alanine + di-trans,octa-cis-undecaprenyl phosphate = Mur2Ac(oyl-L-Ala-gamma-D-Glu-L-Lys-D-Ala-D-Ala)-di-trans,octa-cis-undecaprenyl diphosphate + UMP. Its pathway is cell wall biogenesis; peptidoglycan biosynthesis. Catalyzes the initial step of the lipid cycle reactions in the biosynthesis of the cell wall peptidoglycan: transfers peptidoglycan precursor phospho-MurNAc-pentapeptide from UDP-MurNAc-pentapeptide onto the lipid carrier undecaprenyl phosphate, yielding undecaprenyl-pyrophosphoryl-MurNAc-pentapeptide, known as lipid I. The protein is Phospho-N-acetylmuramoyl-pentapeptide-transferase of Streptococcus pyogenes serotype M1.